Reading from the N-terminus, the 124-residue chain is Small ribosomal subunit protein bS6m (124 aa).

This sequence belongs to the bacterial ribosomal protein bS6 family. In terms of assembly, component of the mitochondrial ribosome small subunit (28S) which comprises a 12S rRNA and about 30 distinct proteins.

The protein resides in the mitochondrion. This chain is Small ribosomal subunit protein bS6m (MRPS6), found in Bos taurus (Bovine).